Reading from the N-terminus, the 142-residue chain is Large ribosomal subunit protein uL11 (142 aa).

It belongs to the universal ribosomal protein uL11 family. Part of the ribosomal stalk of the 50S ribosomal subunit. Interacts with L10 and the large rRNA to form the base of the stalk. L10 forms an elongated spine to which L12 dimers bind in a sequential fashion forming a multimeric L10(L12)X complex. One or more lysine residues are methylated.

Its function is as follows. Forms part of the ribosomal stalk which helps the ribosome interact with GTP-bound translation factors. The sequence is that of Large ribosomal subunit protein uL11 from Vibrio vulnificus (strain YJ016).